The sequence spans 486 residues: Glycogen synthase (486 aa).

Residue Lys15 coordinates ADP-alpha-D-glucose.

The protein belongs to the glycosyltransferase 1 family. Bacterial/plant glycogen synthase subfamily.

The enzyme catalyses [(1-&gt;4)-alpha-D-glucosyl](n) + ADP-alpha-D-glucose = [(1-&gt;4)-alpha-D-glucosyl](n+1) + ADP + H(+). Its pathway is glycan biosynthesis; glycogen biosynthesis. Its function is as follows. Synthesizes alpha-1,4-glucan chains using ADP-glucose. The sequence is that of Glycogen synthase from Thermotoga maritima (strain ATCC 43589 / DSM 3109 / JCM 10099 / NBRC 100826 / MSB8).